A 467-amino-acid polypeptide reads, in one-letter code: Transcription factor fos-1 (467 aa).

Over residues 1–22 the composition is skewed to low complexity; that stretch reads MFEQPSSTTNTTTSSGSGSDSN. Disordered stretches follow at residues 1–38 and 139–179; these read MFEQ…QAHP and QYST…AAAR. The bZIP domain maps to 163–226; sequence DDKRLKRRQR…NSLKNYLETH (64 aa). The basic motif stretch occupies residues 165–205; sequence KRLKRRQRNKEAAARCRQRRIDLMKELQDQVNDFKNSNDKK. The segment at 212 to 219 is leucine-zipper; the sequence is IRNKLNSL. Disordered regions lie at residues 266 to 291 and 395 to 467; these read RADS…PVED and QPIT…LRPL. Residues 273–286 show a composition bias toward low complexity; that stretch reads SIRSGHSSSSSEQH. Polar residues predominate over residues 434–454; that stretch reads SSNTGLTPSGQPTMNFVSTPT. Residues T440, T452, and T454 each carry the phosphothreonine modification.

The protein belongs to the bZIP family. Fos subfamily. In terms of assembly, homodimer. Heterodimer; with jun-1. Interacts with kgb-1 and hda-1. May be phosphorylated by kgb-1. Phosphorylation at Thr-440 increases sensitivity to heavy metal stress. Phosphorylation inhibits homodimer formation, and promotes association with target promoters. Expressed in anchor cells. Isoform a is expressed in somatic gonad cells that neighbor anchor cells. Isoform b is expressed in vulval cells, the uterine cells that neighbor anchor cells and the spermatheca.

It localises to the nucleus. Its function is as follows. Developmentally regulated transcription factor which binds and recognizes the enhancer DNA sequence 5'-TGA[CG]TCA-3'. Functionally, plays a role the development of the reproductive system, controlling events including anchor cell (AC) fusion and invasion. Regulates downstream transcriptional targets, including zmp-1, cdh-3, him-4 and mig10b, to promote the removal of the gonadal basement membrane during AC invasion. Regulates aff-1 expression to promote AC fusion. With jun-1 regulates egl-1 and lin-12 expression to allow uterine cell specification and development. Required for ovulation. Controls plc-1 expression in the spermatheca to regulate spermathecal valve dilation. Acts with hda-1 as a downstream repressor of the kgb-1 mediated stress response pathway that transcriptionally represses genes involved in the response to heavy metals, such as kreg-1. This Caenorhabditis elegans protein is Transcription factor fos-1.